A 371-amino-acid polypeptide reads, in one-letter code: Putative HAD-like hydrolase Noc_2718 (371 aa).

The HAD-like hydrolase stretch occupies residues 1–288 (MKQKILLCSD…TGREESAEEE (288 aa)). One can recognise a YcgL domain in the interval 291 to 371 (QSCAIYRSCK…QLSSREYRRS (81 aa)).

It in the N-terminal section; belongs to the HAD-like hydrolase superfamily.

This chain is Putative HAD-like hydrolase Noc_2718, found in Nitrosococcus oceani (strain ATCC 19707 / BCRC 17464 / JCM 30415 / NCIMB 11848 / C-107).